The primary structure comprises 229 residues: Urease accessory protein UreF (229 aa).

Belongs to the UreF family. UreD, UreF and UreG form a complex that acts as a GTP-hydrolysis-dependent molecular chaperone, activating the urease apoprotein by helping to assemble the nickel containing metallocenter of UreC. The UreE protein probably delivers the nickel.

The protein localises to the cytoplasm. In terms of biological role, required for maturation of urease via the functional incorporation of the urease nickel metallocenter. This is Urease accessory protein UreF from Staphylococcus aureus (strain USA300).